The primary structure comprises 357 residues: Leucoanthocyanidin dioxygenase (357 aa).

A Fe2OG dioxygenase domain is found at 212 to 311 (LLLQMKINYY…RISWAVFCEP (100 aa)). Positions 236, 238, and 292 each coordinate Fe cation.

It belongs to the iron/ascorbate-dependent oxidoreductase family. It depends on Fe cation as a cofactor. Requires L-ascorbate as cofactor.

The enzyme catalyses a (2R,3S,4S)-leucoanthocyanidin + 2-oxoglutarate + O2 = a 4-H-anthocyanidin with a 3-hydroxy group + succinate + CO2 + 2 H2O. It functions in the pathway pigment biosynthesis; anthocyanin biosynthesis. Its function is as follows. Oxidation of leucoanthocyanidins into anthocyanidins. This chain is Leucoanthocyanidin dioxygenase (ANS), found in Malus domestica (Apple).